The following is a 198-amino-acid chain: Patulin synthesis protein F (198 aa).

Positions 1 to 18 (MRLSTVLLGSLLGALTQA) are cleaved as a signal peptide. Residues asparagine 128 and asparagine 184 are each glycosylated (N-linked (GlcNAc...) asparagine).

Belongs to the patF family.

It localises to the cytoplasm. Its subcellular location is the cytosol. It carries out the reaction phyllostine = neopatulin. The protein operates within mycotoxin biosynthesis; patulin biosynthesis. Its function is as follows. Part of the gene cluster that mediates the biosynthesis of patulin, an acetate-derived tetraketide mycotoxin produced by several fungal species that shows antimicrobial properties against several bacteria. PatF catalyzes the conversion of phyllostine into neopatulin. The pathway begins with the synthesis of 6-methylsalicylic acid by the polyketide synthase (PKS) patK via condensation of acetate and malonate units. The 6-methylsalicylic acid decarboxylase patG then catalyzes the decarboxylation of 6-methylsalicylic acid to yield m-cresol (also known as 3-methylphenol). These first reactions occur in the cytosol. The intermediate m-cresol is then transported into the endoplasmic reticulum where the cytochrome P450 monooxygenase patH converts it to m-hydroxybenzyl alcohol, which is further converted to gentisyl alcohol by the cytochrome P450 monooxygenase patI. The oxidoreductases patJ and patO further convert gentisyl alcohol to isoepoxydon in the vacuole. PatN catalyzes then the transformation of isoepoxydon into phyllostine. The cluster protein patF is responsible for the conversion from phyllostine to neopatulin whereas the alcohol dehydrogenase patD converts neopatulin to E-ascladiol. The steps between isoepoxydon and E-ascladiol occur in the cytosol, and E-ascladiol is probably secreted to the extracellular space by one of the cluster-specific transporters patC or patM. Finally, the secreted patulin synthase patE catalyzes the conversion of E-ascladiol to patulin. The sequence is that of Patulin synthesis protein F from Aspergillus clavatus (strain ATCC 1007 / CBS 513.65 / DSM 816 / NCTC 3887 / NRRL 1 / QM 1276 / 107).